The sequence spans 328 residues: tRNA uridine(34) hydroxylase (328 aa).

Residues 130–224 (LDKDTVVLDT…YGKDPEVQGE (95 aa)) enclose the Rhodanese domain. Cys184 (cysteine persulfide intermediate) is an active-site residue.

This sequence belongs to the TrhO family.

It catalyses the reaction uridine(34) in tRNA + AH2 + O2 = 5-hydroxyuridine(34) in tRNA + A + H2O. Its function is as follows. Catalyzes oxygen-dependent 5-hydroxyuridine (ho5U) modification at position 34 in tRNAs. This is tRNA uridine(34) hydroxylase from Streptococcus pneumoniae (strain ATCC 700669 / Spain 23F-1).